Reading from the N-terminus, the 327-residue chain is Beta-1,4-galactosyltransferase 7 (327 aa).

The Cytoplasmic segment spans residues 1–30 (MFPSRRKAAQLPWEDGRSGLLSGGLPRKCS). The helical; Signal-anchor for type II membrane protein transmembrane segment at 31–51 (VFHLFVACLSLGFFSLLWLQL) threads the bilayer. Topologically, residues 52 to 327 (SCSGDVARAV…KTATPWCTFS (276 aa)) are lumenal. The tract at residues 63 to 87 (GQGQETSGPPRACPPEPPPEHWEED) is disordered. Residues 100–104 (PFRER) and 139–141 (FNR) each bind UDP-alpha-D-galactose. N-linked (GlcNAc...) asparagine glycosylation is present at asparagine 154. UDP-alpha-D-galactose-binding positions include 164–165 (VD), tyrosine 194, and tryptophan 224. A Mn(2+)-binding site is contributed by aspartate 165. Residue 226-229 (REDD) coordinates N-acetyl-D-glucosamine. Histidine 257 is a binding site for Mn(2+). UDP-alpha-D-galactose contacts are provided by residues 257-259 (HLH) and arginine 266. The cysteines at positions 316 and 324 are disulfide-linked.

Belongs to the glycosyltransferase 7 family. The cofactor is Mn(2+). In terms of tissue distribution, high expression in heart, pancreas and liver, medium in placenta and kidney, low in brain, skeletal muscle and lung.

It is found in the golgi apparatus. The protein localises to the golgi stack membrane. The enzyme catalyses 3-O-(beta-D-xylosyl)-L-seryl-[protein] + UDP-alpha-D-galactose = 3-O-(beta-D-galactosyl-(1-&gt;4)-beta-D-xylosyl)-L-seryl-[protein] + UDP + H(+). It participates in protein modification; protein glycosylation. Functionally, required for the biosynthesis of the tetrasaccharide linkage region of proteoglycans, especially for small proteoglycans in skin fibroblasts. This Homo sapiens (Human) protein is Beta-1,4-galactosyltransferase 7 (B4GALT7).